Consider the following 94-residue polypeptide: Mobilization protein C (94 aa).

As to quaternary structure, interacts with MobA and MobB to form the relaxosome.

Functionally, this protein is essential to promote the specific transfer of the plasmid in the presence of conjugative plasmids. This Escherichia coli protein is Mobilization protein C (mobC).